The primary structure comprises 232 residues: Ubiquinone biosynthesis O-methyltransferase (232 aa).

Residues arginine 36, glycine 55, aspartate 76, and leucine 120 each coordinate S-adenosyl-L-methionine.

It belongs to the methyltransferase superfamily. UbiG/COQ3 family.

It carries out the reaction a 3-demethylubiquinol + S-adenosyl-L-methionine = a ubiquinol + S-adenosyl-L-homocysteine + H(+). It catalyses the reaction a 3-(all-trans-polyprenyl)benzene-1,2-diol + S-adenosyl-L-methionine = a 2-methoxy-6-(all-trans-polyprenyl)phenol + S-adenosyl-L-homocysteine + H(+). It participates in cofactor biosynthesis; ubiquinone biosynthesis. In terms of biological role, O-methyltransferase that catalyzes the 2 O-methylation steps in the ubiquinone biosynthetic pathway. This is Ubiquinone biosynthesis O-methyltransferase from Stutzerimonas stutzeri (strain A1501) (Pseudomonas stutzeri).